Here is a 273-residue protein sequence, read N- to C-terminus: 1,4-dihydroxy-2-naphthoyl-CoA synthase (273 aa).

Substrate contacts are provided by residues R34, 73–77 (SGGDQ), Y85, 117–121 (YAVGG), T143, S149, Y246, and K261. 142 to 144 (QTG) contacts hydrogencarbonate. Positions 254–265 (GRDAFKEKRDPD) are enriched in basic and acidic residues. The interval 254–273 (GRDAFKEKRDPDFDQFPKFP) is disordered.

It belongs to the enoyl-CoA hydratase/isomerase family. MenB subfamily. It depends on hydrogencarbonate as a cofactor.

The enzyme catalyses 2-succinylbenzoyl-CoA + H(+) = 1,4-dihydroxy-2-naphthoyl-CoA + H2O. It participates in quinol/quinone metabolism; 1,4-dihydroxy-2-naphthoate biosynthesis; 1,4-dihydroxy-2-naphthoate from chorismate: step 6/7. The protein operates within quinol/quinone metabolism; menaquinone biosynthesis. Functionally, converts o-succinylbenzoyl-CoA (OSB-CoA) to 1,4-dihydroxy-2-naphthoyl-CoA (DHNA-CoA). The polypeptide is 1,4-dihydroxy-2-naphthoyl-CoA synthase (Staphylococcus aureus (strain MRSA252)).